The chain runs to 182 residues: ATP-dependent protease subunit HslV (182 aa).

The active site involves threonine 10. Positions 166, 169, and 172 each coordinate Na(+).

This sequence belongs to the peptidase T1B family. HslV subfamily. A double ring-shaped homohexamer of HslV is capped on each side by a ring-shaped HslU homohexamer. The assembly of the HslU/HslV complex is dependent on binding of ATP.

The protein resides in the cytoplasm. The enzyme catalyses ATP-dependent cleavage of peptide bonds with broad specificity.. With respect to regulation, allosterically activated by HslU binding. In terms of biological role, protease subunit of a proteasome-like degradation complex believed to be a general protein degrading machinery. The protein is ATP-dependent protease subunit HslV of Rickettsia bellii (strain OSU 85-389).